The chain runs to 500 residues: Glycerol kinase (500 aa).

Residue Thr-12 coordinates ADP. ATP contacts are provided by Thr-12, Thr-13, and Ser-14. Thr-12 provides a ligand contact to sn-glycerol 3-phosphate. Arg-16 contacts ADP. The sn-glycerol 3-phosphate site is built by Arg-82, Glu-83, Tyr-135, and Asp-245. Glycerol-binding residues include Arg-82, Glu-83, Tyr-135, Asp-245, and Gln-246. Positions 267 and 310 each coordinate ADP. ATP is bound by residues Thr-267, Gly-310, Gln-314, and Gly-411. Gly-411 and Asn-415 together coordinate ADP.

The protein belongs to the FGGY kinase family. In terms of assembly, homotetramer and homodimer (in equilibrium).

It carries out the reaction glycerol + ATP = sn-glycerol 3-phosphate + ADP + H(+). It participates in polyol metabolism; glycerol degradation via glycerol kinase pathway; sn-glycerol 3-phosphate from glycerol: step 1/1. Its activity is regulated as follows. Activated by phosphorylation and inhibited by fructose 1,6-bisphosphate (FBP). In terms of biological role, key enzyme in the regulation of glycerol uptake and metabolism. Catalyzes the phosphorylation of glycerol to yield sn-glycerol 3-phosphate. In Clostridium perfringens (strain SM101 / Type A), this protein is Glycerol kinase.